We begin with the raw amino-acid sequence, 395 residues long: Elongation factor Tu (395 aa).

The region spanning 10 to 204 (KPHCNIGTIG…TVDSYIPDPQ (195 aa)) is the tr-type G domain. Residues 19–26 (GHVDHGKT) form a G1 region. Position 19–26 (19–26 (GHVDHGKT)) interacts with GTP. Mg(2+) is bound at residue threonine 26. The interval 61–65 (GITIS) is G2. The G3 stretch occupies residues 82–85 (DCPG). GTP-binding positions include 82–86 (DCPGH) and 137–140 (NKCD). The tract at residues 137-140 (NKCD) is G4. The G5 stretch occupies residues 173–175 (SAL).

It belongs to the TRAFAC class translation factor GTPase superfamily. Classic translation factor GTPase family. EF-Tu/EF-1A subfamily. As to quaternary structure, monomer.

The protein localises to the cytoplasm. The enzyme catalyses GTP + H2O = GDP + phosphate + H(+). Functionally, GTP hydrolase that promotes the GTP-dependent binding of aminoacyl-tRNA to the A-site of ribosomes during protein biosynthesis. The protein is Elongation factor Tu of Agathobacter rectalis (strain ATCC 33656 / DSM 3377 / JCM 17463 / KCTC 5835 / VPI 0990) (Eubacterium rectale).